The primary structure comprises 371 residues: MIENPIKRRPTRKIRVGSVYVGGDAPISVQSMTNTETCDVDATVAQIERCVDAGADIMRVSVPSMEAAEAFGAIRKRVSVPLVADIHFDHRIALAVADYGADCLRINPGNIGSDQKVREVVAAARHHGISMRIGVNAGSLEKDLQKKYGEPTGQALLESALRHIDILDRLDFHEFKVSVKASNVFLTMDAYRLLSQQIDNPLHLGVTEAGIYRTGTVKSAIALGGLLMEGIGDTMRISLAAEPEDEIKIGFDILKSLGLRSNGINFIACPSCSRQEFNVIQVMQALEERLEDIRTPMDVSVIGCKVNGPGEAKEADIGVVGAAPRSLVYRNGEKSHLIDTNQLVDEIETMVRQRVQELEEAKSKEIIRSSS.

Positions 269, 272, 304, and 311 each coordinate [4Fe-4S] cluster.

It belongs to the IspG family. The cofactor is [4Fe-4S] cluster.

The enzyme catalyses (2E)-4-hydroxy-3-methylbut-2-enyl diphosphate + oxidized [flavodoxin] + H2O + 2 H(+) = 2-C-methyl-D-erythritol 2,4-cyclic diphosphate + reduced [flavodoxin]. The protein operates within isoprenoid biosynthesis; isopentenyl diphosphate biosynthesis via DXP pathway; isopentenyl diphosphate from 1-deoxy-D-xylulose 5-phosphate: step 5/6. Its function is as follows. Converts 2C-methyl-D-erythritol 2,4-cyclodiphosphate (ME-2,4cPP) into 1-hydroxy-2-methyl-2-(E)-butenyl 4-diphosphate. The sequence is that of 4-hydroxy-3-methylbut-2-en-1-yl diphosphate synthase (flavodoxin) from Acinetobacter baumannii (strain AB307-0294).